Consider the following 339-residue polypeptide: Probable cytosolic iron-sulfur protein assembly protein CIAO1 (339 aa).

WD repeat units lie at residues 14 to 53 (HPDS…WICK), 59 to 98 (GHQR…FECV), 103 to 142 (GHEN…EYEC), 148 to 187 (SHTQ…WVCC), 192 to 231 (GHES…NEQG), 250 to 289 (FHSR…DPQQ), and 301 to 339 (AHSQ…PEGL). Residues 176-178 (LYR) carry the LYR motif; required for interaction with HSC20 motif.

The protein belongs to the WD repeat CIA1 family. Component of the CIA complex. Interacts with CIAO2A and forms a complex with CIAO2B and MMS19; the interactions with CIAO2A and CIAO2B are mutually exclusive. Interacts with CHD1L, ERCC2, IREB2 and POLD1. Component of the MMXD complex, which includes CIAO1, ERCC2, CIAO2B, MMS19 and SLC25A5. Interacts with WT1. Interacts with CIAO3. Interacts (via LYR motif) with HSC20.

Its subcellular location is the cytoplasm. In terms of biological role, key component of the cytosolic iron-sulfur protein assembly (CIA) complex, a multiprotein complex that mediates the incorporation of iron-sulfur cluster into extramitochondrial Fe/S proteins. As a CIA complex component, interacts specifically with CIAO2A or CIAO2B and MMS19 to assist different branches of iron-sulfur protein assembly, depending of its interactors. The complex CIAO1:CIAO2B:MMS19 binds to and facilitates the assembly of most cytosolic-nuclear Fe/S proteins. CIAO1:CIAO2A specifically matures ACO1 and stabilizes IREB2. Seems to specifically modulate the transactivation activity of WT1. As part of the mitotic spindle-associated MMXD complex it may play a role in chromosome segregation. This chain is Probable cytosolic iron-sulfur protein assembly protein CIAO1, found in Homo sapiens (Human).